We begin with the raw amino-acid sequence, 311 residues long: Putative S-adenosyl-L-methionine-dependent methyltransferase MUL_4761 (311 aa).

Residues Asp-132 and 161–162 (DL) each bind S-adenosyl-L-methionine.

The protein belongs to the UPF0677 family.

In terms of biological role, exhibits S-adenosyl-L-methionine-dependent methyltransferase activity. This chain is Putative S-adenosyl-L-methionine-dependent methyltransferase MUL_4761, found in Mycobacterium ulcerans (strain Agy99).